The sequence spans 332 residues: Holliday junction branch migration complex subunit RuvB (332 aa).

The tract at residues 1 to 181 (MTRFLDSDAM…FGITGHMEYY (181 aa)) is large ATPase domain (RuvB-L). Residues Leu-20, Arg-21, Gly-62, Lys-65, Thr-66, Thr-67, 128–130 (EDF), Arg-171, Tyr-181, and Arg-218 contribute to the ATP site. Residue Thr-66 coordinates Mg(2+). The interval 182 to 252 (EENDLTEIIE…ITDKALTMLD (71 aa)) is small ATPAse domain (RuvB-S). Positions 255 to 332 (HEGLDYVDQK…EHLGYQRFDK (78 aa)) are head domain (RuvB-H). Arg-291, Arg-310, Arg-312, and Arg-315 together coordinate DNA.

The protein belongs to the RuvB family. Homohexamer. Forms an RuvA(8)-RuvB(12)-Holliday junction (HJ) complex. HJ DNA is sandwiched between 2 RuvA tetramers; dsDNA enters through RuvA and exits via RuvB. An RuvB hexamer assembles on each DNA strand where it exits the tetramer. Each RuvB hexamer is contacted by two RuvA subunits (via domain III) on 2 adjacent RuvB subunits; this complex drives branch migration. In the full resolvosome a probable DNA-RuvA(4)-RuvB(12)-RuvC(2) complex forms which resolves the HJ.

Its subcellular location is the cytoplasm. The catalysed reaction is ATP + H2O = ADP + phosphate + H(+). Functionally, the RuvA-RuvB-RuvC complex processes Holliday junction (HJ) DNA during genetic recombination and DNA repair, while the RuvA-RuvB complex plays an important role in the rescue of blocked DNA replication forks via replication fork reversal (RFR). RuvA specifically binds to HJ cruciform DNA, conferring on it an open structure. The RuvB hexamer acts as an ATP-dependent pump, pulling dsDNA into and through the RuvAB complex. RuvB forms 2 homohexamers on either side of HJ DNA bound by 1 or 2 RuvA tetramers; 4 subunits per hexamer contact DNA at a time. Coordinated motions by a converter formed by DNA-disengaged RuvB subunits stimulates ATP hydrolysis and nucleotide exchange. Immobilization of the converter enables RuvB to convert the ATP-contained energy into a lever motion, pulling 2 nucleotides of DNA out of the RuvA tetramer per ATP hydrolyzed, thus driving DNA branch migration. The RuvB motors rotate together with the DNA substrate, which together with the progressing nucleotide cycle form the mechanistic basis for DNA recombination by continuous HJ branch migration. Branch migration allows RuvC to scan DNA until it finds its consensus sequence, where it cleaves and resolves cruciform DNA. This is Holliday junction branch migration complex subunit RuvB from Streptococcus agalactiae serotype V (strain ATCC BAA-611 / 2603 V/R).